Reading from the N-terminus, the 183-residue chain is Peptide deformylase (183 aa).

Cysteine 110 and histidine 153 together coordinate Fe cation. Glutamate 154 is an active-site residue. Histidine 157 provides a ligand contact to Fe cation.

The protein belongs to the polypeptide deformylase family. Fe(2+) serves as cofactor.

It catalyses the reaction N-terminal N-formyl-L-methionyl-[peptide] + H2O = N-terminal L-methionyl-[peptide] + formate. Functionally, removes the formyl group from the N-terminal Met of newly synthesized proteins. Requires at least a dipeptide for an efficient rate of reaction. N-terminal L-methionine is a prerequisite for activity but the enzyme has broad specificity at other positions. In Oceanobacillus iheyensis (strain DSM 14371 / CIP 107618 / JCM 11309 / KCTC 3954 / HTE831), this protein is Peptide deformylase.